A 256-amino-acid chain; its full sequence is 3-dehydroquinate dehydratase (256 aa).

3-dehydroquinate is bound by residues Ser-19, 38 to 40 (EIR), and Arg-68. The active-site Proton donor/acceptor is the His-122. Lys-147 serves as the catalytic Schiff-base intermediate with substrate. Residues Arg-185, Thr-204, and Gln-208 each coordinate 3-dehydroquinate.

It belongs to the type-I 3-dehydroquinase family. Homodimer.

It carries out the reaction 3-dehydroquinate = 3-dehydroshikimate + H2O. The protein operates within metabolic intermediate biosynthesis; chorismate biosynthesis; chorismate from D-erythrose 4-phosphate and phosphoenolpyruvate: step 3/7. Involved in the third step of the chorismate pathway, which leads to the biosynthesis of aromatic amino acids. Catalyzes the cis-dehydration of 3-dehydroquinate (DHQ) and introduces the first double bond of the aromatic ring to yield 3-dehydroshikimate. In Methanospirillum hungatei JF-1 (strain ATCC 27890 / DSM 864 / NBRC 100397 / JF-1), this protein is 3-dehydroquinate dehydratase.